A 196-amino-acid chain; its full sequence is MEKFTIYTGTTVPLMNDNIDTDQILPKQFLKLIDKKGFGKYLMYAWRYLDNQYTEDPDFVFNRPEYRKATILITGDNFGAGSSREHAAWALADYGFKVVIAGSFGDIHYNNELNNGMLPIVQPLEVRQALANLKPTDQVTVDLEQQKIFSPVGEFSFDIDGEWKHKLLNGLDDIGITLLYEDLIAEYEKNRPSYWQ.

The protein belongs to the LeuD family. LeuD type 1 subfamily. Heterodimer of LeuC and LeuD.

The catalysed reaction is (2R,3S)-3-isopropylmalate = (2S)-2-isopropylmalate. It functions in the pathway amino-acid biosynthesis; L-leucine biosynthesis; L-leucine from 3-methyl-2-oxobutanoate: step 2/4. Catalyzes the isomerization between 2-isopropylmalate and 3-isopropylmalate, via the formation of 2-isopropylmaleate. The chain is 3-isopropylmalate dehydratase small subunit from Streptococcus gordonii (strain Challis / ATCC 35105 / BCRC 15272 / CH1 / DL1 / V288).